The following is a 567-amino-acid chain: Proline--tRNA ligase (567 aa).

The protein belongs to the class-II aminoacyl-tRNA synthetase family. ProS type 1 subfamily. In terms of assembly, homodimer.

It localises to the cytoplasm. It catalyses the reaction tRNA(Pro) + L-proline + ATP = L-prolyl-tRNA(Pro) + AMP + diphosphate. In terms of biological role, catalyzes the attachment of proline to tRNA(Pro) in a two-step reaction: proline is first activated by ATP to form Pro-AMP and then transferred to the acceptor end of tRNA(Pro). As ProRS can inadvertently accommodate and process non-cognate amino acids such as alanine and cysteine, to avoid such errors it has two additional distinct editing activities against alanine. One activity is designated as 'pretransfer' editing and involves the tRNA(Pro)-independent hydrolysis of activated Ala-AMP. The other activity is designated 'posttransfer' editing and involves deacylation of mischarged Ala-tRNA(Pro). The misacylated Cys-tRNA(Pro) is not edited by ProRS. The chain is Proline--tRNA ligase from Geobacillus kaustophilus (strain HTA426).